We begin with the raw amino-acid sequence, 209 residues long: Uracil phosphoribosyltransferase (209 aa).

5-phospho-alpha-D-ribose 1-diphosphate-binding positions include Arg-79, Arg-104, and 131–139 (DPMLATGGS). Residues Ile-194 and 199 to 201 (GDA) contribute to the uracil site. Residue Asp-200 participates in 5-phospho-alpha-D-ribose 1-diphosphate binding.

This sequence belongs to the UPRTase family. The cofactor is Mg(2+).

It catalyses the reaction UMP + diphosphate = 5-phospho-alpha-D-ribose 1-diphosphate + uracil. Its pathway is pyrimidine metabolism; UMP biosynthesis via salvage pathway; UMP from uracil: step 1/1. With respect to regulation, allosterically activated by GTP. Catalyzes the conversion of uracil and 5-phospho-alpha-D-ribose 1-diphosphate (PRPP) to UMP and diphosphate. In Natranaerobius thermophilus (strain ATCC BAA-1301 / DSM 18059 / JW/NM-WN-LF), this protein is Uracil phosphoribosyltransferase.